Reading from the N-terminus, the 144-residue chain is Ribosomally synthesized cyclic peptide phomopsin precursor phomA' (144 aa).

The signal sequence occupies residues 1–18 (MRFTPAIVIAAFCSLAVA). 9 propeptides span residues 19–35 (APAA…AVED), 42–50 (KKRGEAVED), 57–65 (KKRGEAVED), 72–79 (KRGEAVED), 86–94 (KKRGEAVED), 101–108 (KRGEAVED), 115–123 (KKRGEAVED), 130–137 (KRGEAVED), and Lys-144.

PhomA' is processed by several endopeptidases including kexin proteases as well as the cluster-specific S41 family peptidase phomP1' and the peptidase phomG' to produce 5 identical copies of the hexapeptide Tyr-Val-Ile-Pro-Ile-Asp and 3 identical copies of Tyr-Val-Ile-Pro-Phe-Asp, that are further modified into phomapsins A and P, respectively. The timing and order of proteolysis of the phomA' precursor and PTMs are still unknown. Two tyrosinase-like enzyme phomQ1' and PhomQ2, catalyze the chlorination and hydroxylation of Tyr, respectively. PhomYb', is proposed to be involved in the construction of the macrocyclic structure. The other four ustYa family proteins may be involved in PTMs that generate the unique structure of phomopsin A. PhomYa' is required for the hydroxylation of C-beta of Tyr. PhomYc', PhomYd', and PhomYe' are responsible for the biosynthesis of 2,3-dehydroisoleucine (dIle), 2,3-dehydroaspartic acid (dAsp), and 3,4-dehydroproline (dPro), respectively. While dIle formation by phomYc is indispensable for the installation of dAsp by phomYd, the order of the other PTMs have not been elucidated yet. Most of the biosynthetic enzymes likely have broad substrate specificity, and thus, there might be a metabolic grid from a precursor to phomopsin A. The enzyme(s) responsible for the biosynthesis of 3,4-dehydrovaline (dVal) have also not been identified yet. Finally, PhomM' acts as an S-adenosylmethionine-dependent alpha-N-methyltransferase that catalyzes two successive N-methylation reactions, converting N-desmethyl-phomopsin A to phomopsin A and phomopsin A further to an N,N-dimethylated congener called phomopsin E.

Its pathway is mycotoxin biosynthesis. Ribosomally synthesized cyclic peptide phomopsin precursor; part of the gene cluster that mediates the biosynthesis of the phomopsins, a group of hexapeptide mycotoxins which infects lupins and causes lupinosis disease in livestock. The phomA' translated product contains a 5-fold repeated peptide embedding the hexapeptide Tyr-Val-Ile-Pro-Ile-Asp and a 3-fold repeated peptide embedding the hexapeptide Tyr-Val-Ile-Pro-Phe-Asp, that is converted into phomapsin A and phomapsin P, respectively. After being excised from the precursor peptide by kexin proteases, the core peptides are cyclized and modified post-translationally by enzymes encoded within the corresponding gene cluster. This chain is Ribosomally synthesized cyclic peptide phomopsin precursor phomA', found in Diaporthe leptostromiformis (Lupinosis disease fungus).